A 383-amino-acid chain; its full sequence is tRNA-specific 2-thiouridylase MnmA (383 aa).

Residues 9 to 16 (GMSGGVDS) and M35 contribute to the ATP site. The segment at 95 to 97 (NPD) is interaction with target base in tRNA. The active-site Nucleophile is C100. C100 and C196 are joined by a disulfide. G124 lines the ATP pocket. The interaction with tRNA stretch occupies residues 146–148 (KDQ). Catalysis depends on C196, which acts as the Cysteine persulfide intermediate. Residues 308-309 (RY) are interaction with tRNA.

Belongs to the MnmA/TRMU family.

The protein resides in the cytoplasm. The catalysed reaction is S-sulfanyl-L-cysteinyl-[protein] + uridine(34) in tRNA + AH2 + ATP = 2-thiouridine(34) in tRNA + L-cysteinyl-[protein] + A + AMP + diphosphate + H(+). Functionally, catalyzes the 2-thiolation of uridine at the wobble position (U34) of tRNA, leading to the formation of s(2)U34. This chain is tRNA-specific 2-thiouridylase MnmA, found in Burkholderia pseudomallei (strain 1106a).